The sequence spans 213 residues: Charged multivesicular body protein 2b (213 aa).

Position 2 is an N-acetylalanine (Ala2). Positions 25–55 (QRAIIRDRAALEKQEKQLELEIKKMAKIGNK) form a coiled coil. The tract at residues 178 to 202 (MAKAPSAARSLPSASTSKSTISDEE) is disordered. Residues 179–194 (AKAPSAARSLPSASTS) are compositionally biased toward low complexity. A Phosphoserine modification is found at Ser199. An MIT-interacting motif motif is present at residues 201-211 (EEIERQLKALG).

This sequence belongs to the SNF7 family. As to quaternary structure, probable core component of the endosomal sorting required for transport complex III (ESCRT-III). ESCRT-III components are thought to multimerize to form a flat lattice on the perimeter membrane of the endosome. Several assembly forms of ESCRT-III may exist that interact and act sequentially. Interacts with CHMP2A. Interacts with VPS4A. Interacts with VPS4B; the interaction is direct.

It localises to the cytoplasm. It is found in the cytosol. Its subcellular location is the late endosome membrane. Its function is as follows. Probable core component of the endosomal sorting required for transport complex III (ESCRT-III) which is involved in multivesicular bodies (MVBs) formation and sorting of endosomal cargo proteins into MVBs. MVBs contain intraluminal vesicles (ILVs) that are generated by invagination and scission from the limiting membrane of the endosome and mostly are delivered to lysosomes enabling degradation of membrane proteins, such as stimulated growth factor receptors, lysosomal enzymes and lipids. The MVB pathway appears to require the sequential function of ESCRT-O, -I,-II and -III complexes. ESCRT-III proteins mostly dissociate from the invaginating membrane before the ILV is released. The ESCRT machinery also functions in topologically equivalent membrane fission events, such as the terminal stages of cytokinesis and the budding of enveloped viruses (lentiviruses). ESCRT-III proteins are believed to mediate the necessary vesicle extrusion and/or membrane fission activities, possibly in conjunction with the AAA ATPase VPS4. This chain is Charged multivesicular body protein 2b (CHMP2B), found in Bos taurus (Bovine).